Here is a 141-residue protein sequence, read N- to C-terminus: HTH-type transcriptional regulator MntR (141 aa).

The 63-residue stretch at 1 to 63 (MPTPSMEDYI…YEKYRGLVLT (63 aa)) folds into the HTH dtxR-type domain. The Mn(2+) site is built by Asp8, Glu11, His77, Glu99, Glu102, and His103.

The protein belongs to the DtxR/MntR family. As to quaternary structure, homodimer.

The protein resides in the cytoplasm. With respect to regulation, DNA binding is strongly activated by Mn(2+). In terms of biological role, central regulator of manganese homeostasis. The sequence is that of HTH-type transcriptional regulator MntR from Geobacillus thermodenitrificans (strain NG80-2).